The chain runs to 724 residues: Probable serine/threonine-protein kinase KKQ8 (724 aa).

Disordered stretches follow at residues 1 to 81 (MVMQ…RQRS) and 93 to 188 (HPFR…KDIL). At Ser19 the chain carries Phosphoserine. Residues 45 to 54 (PYRSSSTSPK) show a composition bias toward low complexity. Residues 95–106 (FRQTGSGASNSP) show a composition bias toward polar residues. The span at 143 to 162 (RSSSVSSCDSSNGTTSSSDS) shows a compositional bias: low complexity. Residues Ser232, Ser238, and Ser241 each carry the phosphoserine modification. Polar residues-rich tracts occupy residues 318–329 (NASSLLPNVEKS) and 338–351 (GQSP…SPTQ). Residues 318-355 (NASSLLPNVEKSQTNHEKRTGQSPNDSNRSSPTQGRED) are disordered. Residues 412 to 712 (GHPVGLVGAG…VGKLLDMQWM (301 aa)) enclose the Protein kinase domain. ATP is bound by residues 418–426 (VGAGAYGEV) and Lys455. Catalysis depends on Asp563, which acts as the Proton acceptor.

Belongs to the protein kinase superfamily. CAMK Ser/Thr protein kinase family. NPR/HAL subfamily. HAL5 sub-subfamily.

Its subcellular location is the cytoplasm. It carries out the reaction L-seryl-[protein] + ATP = O-phospho-L-seryl-[protein] + ADP + H(+). It catalyses the reaction L-threonyl-[protein] + ATP = O-phospho-L-threonyl-[protein] + ADP + H(+). The chain is Probable serine/threonine-protein kinase KKQ8 (KKQ8) from Saccharomyces cerevisiae (strain YJM789) (Baker's yeast).